The sequence spans 155 residues: Small ribosomal subunit protein uS7c (155 aa).

This sequence belongs to the universal ribosomal protein uS7 family. As to quaternary structure, part of the 30S ribosomal subunit.

It is found in the plastid. It localises to the chloroplast. One of the primary rRNA binding proteins, it binds directly to 16S rRNA where it nucleates assembly of the head domain of the 30S subunit. The sequence is that of Small ribosomal subunit protein uS7c (rps7) from Euonymus alatus (Burning bush).